The chain runs to 175 residues: 19.0 kDa class II heat shock protein (175 aa).

A sHSP domain is found at 42–165; that stretch reads DRRAMANTPM…KPRVVEVKVA (124 aa). The tract at residues 145–175 is disordered; the sequence is TVDKKPPPEPKKPRVVEVKVAGAGEPKGKGK. A compositionally biased stretch (basic and acidic residues) spans 146–161; it reads VDKKPPPEPKKPRVVE.

The protein belongs to the small heat shock protein (HSP20) family. May form oligomeric structures.

It is found in the cytoplasm. This chain is 19.0 kDa class II heat shock protein (HSP19.0), found in Oryza sativa subsp. japonica (Rice).